The chain runs to 1249 residues: Clustered mitochondria protein homolog (1249 aa).

Positions 1–32 are disordered; it reads MAQTNGELEHSKETPEQLTNGNHPEETQEEDN. A Clu domain is found at 318–562; that stretch reads DITRSQENYL…RVTPLDVMWQ (245 aa). Over residues 605 to 628 the composition is skewed to basic and acidic residues; sequence KAEADAAKAESSEATESKEQASEE. Disordered regions lie at residues 605–636 and 868–903; these read KAEADAAKAESSEATESKEQASEEKSEEDQER and KAPATNGANGVAQEEGKNKKKKKGGDSSSPARAAKE. TPR repeat units follow at residues 974–1007, 1016–1049, and 1058–1091; these read AKLYHQLSMLYYQTDEKEAAVELARKAVIVTERT, ILSYLNLSLFEHASGNTKTALAYIKHAMDLWKII, and ITTMNNAAVMLQHLKQYSDSRKWFEASLEVCESL. The segment at 1174 to 1249 is disordered; the sequence is NMNPRSLGTK…KLRGSKKSSA (76 aa). Residues 1176–1190 are compositionally biased toward polar residues; it reads NPRSLGTKIQPQVGQ.

The protein belongs to the CLU family. As to quaternary structure, may associate with the eukaryotic translation initiation factor 3 (eIF-3) complex.

The protein localises to the cytoplasm. In terms of biological role, mRNA-binding protein involved in proper cytoplasmic distribution of mitochondria. This Aspergillus niger (strain ATCC MYA-4892 / CBS 513.88 / FGSC A1513) protein is Clustered mitochondria protein homolog.